Here is a 257-residue protein sequence, read N- to C-terminus: Acetylglutamate kinase (257 aa).

Residues 40-41, arginine 62, and asparagine 155 each bind substrate; that span reads GG.

This sequence belongs to the acetylglutamate kinase family. ArgB subfamily.

It is found in the cytoplasm. It catalyses the reaction N-acetyl-L-glutamate + ATP = N-acetyl-L-glutamyl 5-phosphate + ADP. Its pathway is amino-acid biosynthesis; L-arginine biosynthesis; N(2)-acetyl-L-ornithine from L-glutamate: step 2/4. Its function is as follows. Catalyzes the ATP-dependent phosphorylation of N-acetyl-L-glutamate. This is Acetylglutamate kinase from Shouchella clausii (strain KSM-K16) (Alkalihalobacillus clausii).